A 501-amino-acid chain; its full sequence is Ammonium transporter 1 member 1 (501 aa).

10 consecutive transmembrane segments (helical) span residues 8 to 28 (LAVL…GQLG), 46 to 66 (LLFS…LCAG), 81 to 101 (VLDA…FAFG), 128 to 148 (FLYQ…SIAE), 152 to 172 (FVAY…VVSH), 199 to 219 (FAGS…GALI), 243 to 263 (LVVL…PGSF), 333 to 353 (VVEP…LLGC), 366 to 386 (LEAA…TALF), and 419 to 439 (LIQI…LFFI). Residue Thr460 is modified to Phosphothreonine. 4 positions are modified to phosphoserine: Ser475, Ser488, Ser490, and Ser492.

This sequence belongs to the ammonia transporter channel (TC 1.A.11.2) family. As to quaternary structure, self interacts. Interacts with the receptor protein kinases CEPR2, At2g28990 and PAM74. In terms of tissue distribution, highly expressed in roots. Expressed in root tips, root hairs, root epidermis, rhizodermis, cortex and pericycle. Expressed in leaves epidermal and mesophyll cells.

Its subcellular location is the cell membrane. In terms of biological role, high affinity ammonium transporter probably involved in ammonium uptake from the soil, long-distance transport to the shoots and re-uptake of apoplastic ammonium that derives from photorespiration in shoots. Contributes with AMT1-3 to the overall ammonium uptake capacity in roots under nitrogen-deficiency conditions. The polypeptide is Ammonium transporter 1 member 1 (AMT1-1) (Arabidopsis thaliana (Mouse-ear cress)).